The chain runs to 42 residues: Photosystem II reaction center protein J (42 aa).

Residues Ile-10–Phe-30 traverse the membrane as a helical segment.

It belongs to the PsbJ family. In terms of assembly, PSII is composed of 1 copy each of membrane proteins PsbA, PsbB, PsbC, PsbD, PsbE, PsbF, PsbH, PsbI, PsbJ, PsbK, PsbL, PsbM, PsbT, PsbX, PsbY, PsbZ, Psb30/Ycf12, at least 3 peripheral proteins of the oxygen-evolving complex and a large number of cofactors. It forms dimeric complexes.

It is found in the plastid. The protein localises to the chloroplast thylakoid membrane. Its function is as follows. One of the components of the core complex of photosystem II (PSII). PSII is a light-driven water:plastoquinone oxidoreductase that uses light energy to abstract electrons from H(2)O, generating O(2) and a proton gradient subsequently used for ATP formation. It consists of a core antenna complex that captures photons, and an electron transfer chain that converts photonic excitation into a charge separation. The polypeptide is Photosystem II reaction center protein J (Oltmannsiellopsis viridis (Marine flagellate)).